Here is a 591-residue protein sequence, read N- to C-terminus: MAEINKQSNKWEQEEVSNENNWELAEEESVDWRGRPSNPNKHGGMRAALFVLGLQAFEIMGIAAVGNNLITYVINEMHFPLSKAANIVTNFVGTIFIFALLGGYLSDAFLGSFWTIIIFGFVELSGFILLSVQAHLPQLKPPKCNPLIDQTCEEAKGFKAMIFFMALYLVALGSGCVKPNMIAHGADQFSQSHPKQSKRLSSYFNAAYFAFSMGELIALTLLVWVQTHSGMDIGFGVSAAAMTMGIISLVSGTMYFRNKRPRRSIFTPIAHVIVAAILKRKLASPSDPRMLHGDHHVANDVVPSSTLPHTPRFRFLDKACIKIQDTNTKESPWRLCTVTQVEQVKTLISLVPIFASTIVFNTILAQLQTFSVQQGSSMNTRLSNSFHIPPASLQAIPYIMLIFLVPLYDSFLVPFARKLTGHNSGIPPLTRIGIGLFLSTFSMVSAAMLEKKRRDSSVLDGRILSIFWITPQFLIFGISEMFTAVGLIEFFYKQSAKGMESFLMALTYCSYSFGFYFSSVLVSVVNKITSTSVDSKGWLGENDLNKDRLDLFYWLLAVLSLLNFLSYLFWSRWNIKSSRRNNTNVVGDENI.

Over residues 1–10 the composition is skewed to polar residues; the sequence is MAEINKQSNK. The disordered stretch occupies residues 1–38; that stretch reads MAEINKQSNKWEQEEVSNENNWELAEEESVDWRGRPSN. The next 12 helical transmembrane spans lie at 47 to 67, 85 to 105, 109 to 129, 157 to 177, 204 to 224, 233 to 253, 347 to 367, 395 to 415, 429 to 449, 463 to 483, 502 to 522, and 551 to 571; these read AALF…AVGN, ANIV…GGYL, FLGS…GFIL, GFKA…SGCV, FNAA…LLVW, IGFG…VSGT, LISL…LAQL, AIPY…LVPF, LTRI…AAML, ILSI…EMFT, FLMA…SVLV, and LFYW…LFWS.

It belongs to the major facilitator superfamily. Proton-dependent oligopeptide transporter (POT/PTR) (TC 2.A.17) family. In terms of tissue distribution, expressed in flowers. Detected in roots and siliques.

The protein resides in the membrane. The sequence is that of Protein NRT1/ PTR FAMILY 4.3 (NPF4.3) from Arabidopsis thaliana (Mouse-ear cress).